The primary structure comprises 362 residues: Beta-ketoacyl-[acyl-carrier-protein] synthase III 2 (362 aa).

Residues C113 and H251 contribute to the active site. Positions 252–256 (QANIR) are ACP-binding. N281 is an active-site residue.

This sequence belongs to the thiolase-like superfamily. FabH family. In terms of assembly, homodimer.

The protein resides in the cytoplasm. It carries out the reaction malonyl-[ACP] + acetyl-CoA + H(+) = 3-oxobutanoyl-[ACP] + CO2 + CoA. It participates in lipid metabolism; fatty acid biosynthesis. Functionally, catalyzes the condensation reaction of fatty acid synthesis by the addition to an acyl acceptor of two carbons from malonyl-ACP. Catalyzes the first condensation reaction which initiates fatty acid synthesis and may therefore play a role in governing the total rate of fatty acid production. Possesses both acetoacetyl-ACP synthase and acetyl transacylase activities. Its substrate specificity determines the biosynthesis of branched-chain and/or straight-chain of fatty acids. The polypeptide is Beta-ketoacyl-[acyl-carrier-protein] synthase III 2 (Vibrio vulnificus (strain YJ016)).